Consider the following 726-residue polypeptide: Catalase-peroxidase 1 (726 aa).

The interval 1 to 33 (MSTSDDIHNTTATGKCPFHQGGHDQSAGAGTTT) is disordered. Residues 105–226 (WHGAGTYRSI…LGATEMGLIY (122 aa)) constitute a cross-link (tryptophyl-tyrosyl-methioninium (Trp-Tyr) (with M-252)). Residue His-106 is the Proton acceptor of the active site. A cross-link (tryptophyl-tyrosyl-methioninium (Tyr-Met) (with W-105)) is located at residues 226 to 252 (YVNPEGPDHSGEPLSAAAAIRATFGNM). Position 267 (His-267) interacts with heme b.

Belongs to the peroxidase family. Peroxidase/catalase subfamily. Homodimer or homotetramer. It depends on heme b as a cofactor. In terms of processing, formation of the three residue Trp-Tyr-Met cross-link is important for the catalase, but not the peroxidase activity of the enzyme.

The catalysed reaction is H2O2 + AH2 = A + 2 H2O. It catalyses the reaction 2 H2O2 = O2 + 2 H2O. Bifunctional enzyme with both catalase and broad-spectrum peroxidase activity. This is Catalase-peroxidase 1 from Escherichia coli O157:H7.